The chain runs to 202 residues: Holliday junction branch migration complex subunit RuvA (202 aa).

The segment at 1–65 is domain I; it reads MIAYVEGRLA…EDALELYGFA (65 aa). The tract at residues 66–144 is domain II; that stretch reads TWDERQTFIV…VEDLPAAAPL (79 aa). The segment at 145–155 is flexible linker; that stretch reads VTGGAPGGVFR. Positions 155-202 are domain III; it reads RDALAGLANLGYGEEEASHVLKDVLHGEPDLDVGGALRAALRALARGR.

This sequence belongs to the RuvA family. As to quaternary structure, homotetramer. Forms an RuvA(8)-RuvB(12)-Holliday junction (HJ) complex. HJ DNA is sandwiched between 2 RuvA tetramers; dsDNA enters through RuvA and exits via RuvB. An RuvB hexamer assembles on each DNA strand where it exits the tetramer. Each RuvB hexamer is contacted by two RuvA subunits (via domain III) on 2 adjacent RuvB subunits; this complex drives branch migration. In the full resolvosome a probable DNA-RuvA(4)-RuvB(12)-RuvC(2) complex forms which resolves the HJ.

Its subcellular location is the cytoplasm. The RuvA-RuvB-RuvC complex processes Holliday junction (HJ) DNA during genetic recombination and DNA repair, while the RuvA-RuvB complex plays an important role in the rescue of blocked DNA replication forks via replication fork reversal (RFR). RuvA specifically binds to HJ cruciform DNA, conferring on it an open structure. The RuvB hexamer acts as an ATP-dependent pump, pulling dsDNA into and through the RuvAB complex. HJ branch migration allows RuvC to scan DNA until it finds its consensus sequence, where it cleaves and resolves the cruciform DNA. The protein is Holliday junction branch migration complex subunit RuvA of Nitratidesulfovibrio vulgaris (strain ATCC 29579 / DSM 644 / CCUG 34227 / NCIMB 8303 / VKM B-1760 / Hildenborough) (Desulfovibrio vulgaris).